The chain runs to 67 residues: Ubiquinol-cytochrome c reductase complex assembly factor 6 (67 aa).

The Mitochondrial matrix portion of the chain corresponds to 1 to 8 (MPGGVPWS). A helical; Signal-anchor for type II membrane protein transmembrane segment spans residues 9–25 (AYLKMLSSSLLAMCAGA). Over 26–67 (QVVHWYYRPDLTIPEIPPKPGELKTELLGLKERRHEPHVSQQ) the chain is Mitochondrial intermembrane.

This sequence belongs to the UQCC6 family. Interacts with UQCRC1. Interacts with UQCRQ. Interacts with UQCC5. Forms a complex, named COMB/coordinator of mitochondrial CYTB biogenesis, composed of UQCC1, UQCC2, UQCC4, UQCC5 and UQCC6; stabilizes nascent cytochrome b/MT-CYB and promotes its membrane insertion. Forms a complex, named COMA, composed of UQCC1, UQCC2 and UQCC4; activates MT-CYB translation. Forms a complex, named COMC, composed of UQCC1, UQCC2; UQCC3 and UQCC4; mediates MT-CYB hemylation and association with the first nuclear-encoded complex III subunit UQCRQ. Interacts with MT-CYB. As to expression, highly expressed in brown adipose, cardiac and skeletal muscle (at protein level).

The protein resides in the mitochondrion inner membrane. In terms of biological role, required for the assembly and stability of the mitochondrial ubiquinol-cytochrome c reductase complex (complex III or cytochrome b-c1 complex), a multisubunit transmembrane complex that is part of the mitochondrial electron transport chain (ETC) which drives oxidative phosphorylation. Mediates early complex III biogenesis. Participates in regulating the levels of electron transport chain proteins, and therefore energy supply, in response to changes in energy demand. Also required for cytochrome c oxidase complex (complex IV) assembly. This is Ubiquinol-cytochrome c reductase complex assembly factor 6 from Mus musculus (Mouse).